A 569-amino-acid chain; its full sequence is AsmA family protein YicH (569 aa).

The Cytoplasmic segment spans residues 1 to 6 (MKFIGK). The helical transmembrane segment at 7–27 (LLLYILIALLVAIAGLYFLLQ) threads the bilayer. Topologically, residues 28-569 (TRWGAEHISA…GEVTSTEPVR (542 aa)) are periplasmic.

The protein belongs to the AsmA family.

It is found in the cell inner membrane. In Escherichia coli (strain K12), this protein is AsmA family protein YicH (yicH).